The chain runs to 183 residues: Threonylcarbamoyl-AMP synthase (183 aa).

Positions 1–183 constitute a YrdC-like domain; the sequence is MNREQIAEAL…LRTNQLFRQG (183 aa).

This sequence belongs to the SUA5 family. TsaC subfamily.

The protein resides in the cytoplasm. It catalyses the reaction L-threonine + hydrogencarbonate + ATP = L-threonylcarbamoyladenylate + diphosphate + H2O. Functionally, required for the formation of a threonylcarbamoyl group on adenosine at position 37 (t(6)A37) in tRNAs that read codons beginning with adenine. Catalyzes the conversion of L-threonine, HCO(3)(-)/CO(2) and ATP to give threonylcarbamoyl-AMP (TC-AMP) as the acyladenylate intermediate, with the release of diphosphate. This is Threonylcarbamoyl-AMP synthase from Haemophilus influenzae (strain 86-028NP).